Consider the following 173-residue polypeptide: Photosystem I assembly protein Ycf3 (173 aa).

3 TPR repeats span residues 35 to 68 (AYIY…EENK), 72 to 105 (GETL…NPKQ), and 120 to 153 (GRFA…YPGG).

Belongs to the Ycf3 family.

The protein localises to the cellular thylakoid membrane. Essential for the assembly of the photosystem I (PSI) complex. May act as a chaperone-like factor to guide the assembly of the PSI subunits. This Prochlorococcus marinus subsp. pastoris (strain CCMP1986 / NIES-2087 / MED4) protein is Photosystem I assembly protein Ycf3.